Consider the following 338-residue polypeptide: Mitochondrial glutathione transporter SLC25A40 (338 aa).

Solcar repeat units follow at residues 13–131 (VTPL…LTAL), 139–223 (NESR…LKKW), and 233–327 (PTFM…GKSF). The next 6 helical transmembrane spans lie at 19 to 39 (MFAS…FDVV), 103 to 123 (LWSG…IYFT), 145 to 165 (IVAG…LELI), 199 to 220 (WAPT…YEVL), 239 to 259 (FTSG…FDVV), and 298 to 318 (GLFT…AVMI).

This sequence belongs to the mitochondrial carrier (TC 2.A.29) family.

The protein resides in the mitochondrion inner membrane. The catalysed reaction is glutathione(in) = glutathione(out). Functionally, probable mitochondrial transporter required for glutathione import into mitochondria. Glutathione, which plays key roles in oxidative metabolism, is produced exclusively in the cytosol and is imported in many organelles. Mitochondrial glutathione is required for the activity and stability of proteins containing iron-sulfur clusters, as well as erythropoiesis. This is Mitochondrial glutathione transporter SLC25A40 from Bos taurus (Bovine).